Reading from the N-terminus, the 323-residue chain is Non-structural protein 9 (323 aa).

A disordered region spans residues 1-142; that stretch reads MFTSSAAKTG…GGSRPSQERG (142 aa). Residues 33-49 are compositionally biased toward low complexity; it reads IDGSISSGPISTGPDSD. The segment covering 99–115 has biased composition (polar residues); that stretch reads PNHTDIGTSLGQVTTKG.

Its subcellular location is the host cytoplasm. Its function is as follows. Constituent of viral factories. This chain is Non-structural protein 9, found in Rice gall dwarf virus (RGDV).